Consider the following 287-residue polypeptide: UPF0725 protein At1g19060 (287 aa).

This sequence belongs to the UPF0725 (EMB2204) family.

The protein is UPF0725 protein At1g19060 of Arabidopsis thaliana (Mouse-ear cress).